A 281-amino-acid chain; its full sequence is Endonuclease III-like protein 1 (281 aa).

Residues 1–17 (MCAAAPRGGGRAARRLG) constitute a mitochondrion transit peptide. The tract at residues 1-60 (MCAAAPRGGGRAARRLGAATAGSRVPSAAPRYSRRTRRVPIAYEAEPKPESPGPKWEPEN) is disordered. Low complexity predominate over residues 15–24 (RLGAATAGSR). In terms of domain architecture, HhH spans 168–192 (KYGGDIPGTVEELVKLPGVGPKMAH). The Nucleophile; for N-glycosylase activity role is filled by Lys189. [4Fe-4S] cluster-binding residues include Cys259, Cys266, Cys269, and Cys275.

The protein belongs to the Nth/MutY family. The cofactor is [4Fe-4S] cluster.

The protein localises to the nucleus. It localises to the mitochondrion. The enzyme catalyses 2'-deoxyribonucleotide-(2'-deoxyribose 5'-phosphate)-2'-deoxyribonucleotide-DNA = a 3'-end 2'-deoxyribonucleotide-(2,3-dehydro-2,3-deoxyribose 5'-phosphate)-DNA + a 5'-end 5'-phospho-2'-deoxyribonucleoside-DNA + H(+). Functionally, bifunctional DNA N-glycosylase with associated apurinic/apyrimidinic (AP) lyase function that catalyzes the first step in base excision repair (BER), the primary repair pathway for the repair of oxidative DNA damage. The DNA N-glycosylase activity releases the damaged DNA base from DNA by cleaving the N-glycosidic bond, leaving an AP site. The AP lyase activity cleaves the phosphodiester bond 3' to the AP site by a beta-elimination. Primarily recognizes and repairs oxidative base damage of pyrimidines. This Gallus gallus (Chicken) protein is Endonuclease III-like protein 1.